Reading from the N-terminus, the 728-residue chain is MDNPTDTAGKCPVAHGNKPRGPSNRDWWPNQLNVQILHHNSGRADPLGKDFDYAEEFKKLDLDALKKDLHALMTDSQDWWPADFGHYGGLFIRMAWHSAGTYRITDGRGGAGQGQQRFAPLNSWPDNANLDKARRLLWPIKQKYGNRISWADLLILTGNVALESMGFKTFGFAGGRADVWEPEELYWGPEGTWLGDERYSGERQLAEPLGAVQMGLIYVNPEGPNGNPDPVAAARDIRETFARMAMNDEETVALIAGGHTFGKTHGAGDPSFIGAEPEGGAIEDQGLGWKSSFGTGVGKDAITAGLEVTWSQTPTKWSNYFFENLFAYEWELTKSPAGAHQWRAKNAEASIPDAYEPGKKHVPTMLTTDLSLRFDPIYEKISRRFLENPDQFADAFARAWFKLTHRDMGPKVRYLGPEVPAEDLIWQDVIPAVDHPLVDDKDIAELKAKVLATGLTVQELVSTAWASASTFRGSDKRGGANGARIRLAPQKDWEANQPAQLAKVLGVLEGIQKDFNAAQTGAKKISLADLIVLAGAAGVEKAAAAGGNAVSVPLTPGRMDASEAQTDAHSFAPLEPRIDGFRNYVNGKRLQFMKPEEALVDRAQLLTLTGPEMTVLVGGLRVLKAGNPEHGVFTSRPETLTNDFFVNLLDVATQWVPATGKEGVYEGRDRKTGAAKWTGTRVDLIFGSHSQLRAFAEVYGQADAKQKFVKDFVAAWNKVMNADRFDLV.

Residues 1–26 (MDNPTDTAGKCPVAHGNKPRGPSNRD) form a disordered region. Positions 96–218 (WHSAGTYRIT…LGAVQMGLIY (123 aa)) form a cross-link, tryptophyl-tyrosyl-methioninium (Trp-Tyr) (with M-244). Histidine 97 acts as the Proton acceptor in catalysis. A cross-link (tryptophyl-tyrosyl-methioninium (Tyr-Met) (with W-96)) is located at residues 218–244 (YVNPEGPNGNPDPVAAARDIRETFARM). Histidine 259 lines the heme b pocket.

The protein belongs to the peroxidase family. Peroxidase/catalase subfamily. As to quaternary structure, homodimer or homotetramer. Requires heme b as cofactor. In terms of processing, formation of the three residue Trp-Tyr-Met cross-link is important for the catalase, but not the peroxidase activity of the enzyme.

It carries out the reaction H2O2 + AH2 = A + 2 H2O. It catalyses the reaction 2 H2O2 = O2 + 2 H2O. In terms of biological role, bifunctional enzyme with both catalase and broad-spectrum peroxidase activity. Important for stationary phase survival. The polypeptide is Catalase-peroxidase (Rhizobium etli (strain ATCC 51251 / DSM 11541 / JCM 21823 / NBRC 15573 / CFN 42)).